Reading from the N-terminus, the 229-residue chain is Peptidase E (229 aa).

Catalysis depends on charge relay system residues serine 120, aspartate 135, and histidine 157.

Belongs to the peptidase S51 family.

The protein localises to the cytoplasm. The catalysed reaction is Dipeptidase E catalyzes the hydrolysis of dipeptides Asp-|-Xaa. It does not act on peptides with N-terminal Glu, Asn or Gln, nor does it cleave isoaspartyl peptides.. In terms of biological role, hydrolyzes dipeptides containing N-terminal aspartate residues. May play a role in allowing the cell to use peptide aspartate to spare carbon otherwise required for the synthesis of the aspartate family of amino acids. The protein is Peptidase E of Shigella flexneri serotype 5b (strain 8401).